Consider the following 350-residue polypeptide: Probable peptidyl-alpha-hydroxyglycine alpha-amidating lyase pgal-1 (350 aa).

Positions 1–19 are cleaved as a signal peptide; sequence MRASTACLVALLAPFYISA. The stretch at 46–90 is one NHL 1 repeat; sequence DRELIGLFNPSKEIGQVSGLAVNKNGHIVAFHRSGRVWDEKSFND. N103 carries N-linked (GlcNAc...) asparagine glycosylation. 3 NHL repeats span residues 113–154, 162–206, and 212–256; these read KKVI…IDAK, LGEK…FDAK, and QINA…FSAG. 2 disulfide bridges follow: C176/C196 and C241/C252.

This sequence belongs to the peptidyl-alpha-hydroxyglycine alpha-amidating lyase family. Requires Zn(2+) as cofactor.

It localises to the secreted. It carries out the reaction a [peptide]-C-terminal (2S)-2-hydroxyglycine = a [peptide]-C-terminal amide + glyoxylate. Functionally, probable lyase that catalyzes an essential reaction in C-terminal alpha-amidation of peptides. Mediates the dismutation of the unstable peptidyl(2-hydroxyglycine) intermediate to glyoxylate and the corresponding desglycine peptide amide. C-terminal amidation of peptides such as neuropeptides is essential for full biological activity. The sequence is that of Probable peptidyl-alpha-hydroxyglycine alpha-amidating lyase pgal-1 from Caenorhabditis elegans.